The following is a 49-amino-acid chain: Disintegrin eristostatin (49 aa).

The 49-residue stretch at 1 to 49 folds into the Disintegrin domain; it reads QEEPCATGPCCRRCKFKRAGKVCRVARGDWNDDYCTGKSCDCPKNPWNG. Intrachain disulfides connect Cys-5/Cys-14, Cys-10/Cys-35, Cys-11/Cys-40, and Cys-23/Cys-42. The Cell attachment site motif lies at 27 to 29; it reads RGD.

The protein belongs to the venom metalloproteinase (M12B) family. P-II subfamily. P-IIa sub-subfamily. Monomer. In terms of tissue distribution, expressed by the venom gland.

It localises to the secreted. Is a potent inhibitor of ADP-induced platelet aggregation. Acts by binding to alpha-IIb/beta-3 (ITGA2B/ITGB3) receptor on the platelet surface. Binds with the same high affinity to resting and activated platelets. Also binds the alpha-4/beta-1 (ITGA4/ITGB1) integrin. Is a potent inhibitor of human and murine melanoma metastases in mouse model systems, also due to the inhibition of binding between the alpha-4/beta-1 integrin and the vascular cell adhesion protein VCAM1. Reacts neither with the integrin alpha-V/beta-3 (ITGAV/ITGB3) vitronectin receptor nor with the integrin alpha-5/beta-1 (ITGA5/ITGB1) fibronectin receptor. Has no effect on cell proliferation or angiogenesis. Specifically inhibits cell migration on fibronectin, but not that on collagen IV or laminin. May involve fibronectin-binding integrins that mediate cell migration. In Eristicophis macmahoni (Leaf-nosed viper), this protein is Disintegrin eristostatin.